Consider the following 222-residue polypeptide: N-(5'-phosphoribosyl)anthranilate isomerase (222 aa).

It belongs to the TrpF family.

The catalysed reaction is N-(5-phospho-beta-D-ribosyl)anthranilate = 1-(2-carboxyphenylamino)-1-deoxy-D-ribulose 5-phosphate. It participates in amino-acid biosynthesis; L-tryptophan biosynthesis; L-tryptophan from chorismate: step 3/5. This is N-(5'-phosphoribosyl)anthranilate isomerase from Rhizobium leguminosarum bv. trifolii (strain WSM2304).